Here is a 454-residue protein sequence, read N- to C-terminus: Death-associated protein kinase 3 (454 aa).

A Protein kinase domain is found at 13-275 (YEMGEELGSG…IAQSLEHSWI (263 aa)). ATP is bound by residues 19 to 27 (LGSGQFAIV) and Lys-42. Position 50 is a phosphoserine; by autocatalysis (Ser-50). Residues Glu-94 and Val-96 each contribute to the pyridone 6 site. The Proton acceptor role is filled by Asp-139. The interval 161-204 (DFGIAHKIEAGNEFKNIFGTPEFVAPEIVNYEPLGLEADMWSIG) is activation segment. Thr-180 and Thr-225 each carry phosphothreonine. Thr-265 carries the post-translational modification Phosphothreonine; by autocatalysis and ROCK1. The residue at position 299 (Thr-299) is a Phosphothreonine; by autocatalysis, DAPK1 and ROCK1. Thr-306 carries the post-translational modification Phosphothreonine; by autocatalysis. Ser-309 is subject to Phosphoserine; by DAPK1. Residue Ser-311 is modified to Phosphoserine; by autocatalysis and DAPK1. Ser-312, Ser-318, and Ser-326 each carry phosphoserine; by DAPK1. Residues 427-441 (VASEMRFVQDLVRAL) form a leucine-zipper region.

It belongs to the protein kinase superfamily. CAMK Ser/Thr protein kinase family. DAP kinase subfamily. As to quaternary structure, homooligomer in its kinase-active form (homotrimers and homodimers are reported); monomeric in its kinase-inactive form. Homodimerization is required for activation segment autophosphorylation. Isoform 1 and isoform 2 interact with myosin and PPP1R12A; interaction of isoform 1 with PPP1R12A is inhibited by RhoA dominant negative form. Interacts with NLK, DAXX, STAT3, RHOD (GTP-bound form) and TCP10L. Interacts with PAWR; the interaction is reported conflictingly: according to PubMed:17953487 does not interact with PAWR. Interacts with ULK1; may be a substrate of ULK1. Interacts with LUZP1; the interaction is likely to occur throughout the cell cycle and reduces the LUZP1-mediated suppression of MYL9 phosphorylation. Mg(2+) is required as a cofactor. The phosphorylation status is critical for kinase activity, oligomerization and intracellular localization. Phosphorylation at Thr-180, Thr-225 and Thr-265 is essential for activity. The phosphorylated form is localized in the cytoplasm promoted by phosphorylation at Thr-299; nuclear translocation or retention is maximal when it is not phosphorylated. Phosphorylation increases the trimeric form, and its dephosphorylation favors a kinase-inactive monomeric form. Both isoform 1 and isoform 2 can undergo autophosphorylation. In terms of tissue distribution, widely expressed. Isoform 1 and isoform 2 are expressed in the bladder smooth muscle.

It localises to the nucleus. Its subcellular location is the PML body. The protein localises to the cytoplasm. The protein resides in the cytoskeleton. It is found in the microtubule organizing center. It localises to the centrosome. Its subcellular location is the chromosome. The protein localises to the centromere. The protein resides in the spindle. It is found in the midbody. The enzyme catalyses L-seryl-[protein] + ATP = O-phospho-L-seryl-[protein] + ADP + H(+). It catalyses the reaction L-threonyl-[protein] + ATP = O-phospho-L-threonyl-[protein] + ADP + H(+). A sequential activation is proposed: autophosphorylation at consensus sites is leading to dimerization of the catalytic domain stabilized by phosphorylation at Ser-50 and activation segment exchange (producing an active confirmation of both kinase modules in trans) followed by phosphorylation at Thr-180 in the activation segment and at other regulatory sites. Phosphorylation at Thr-180, Thr-225 and Thr-265 is essential for activity. Oligomerization is required for full enzymatic activity. Inhibited by pyridone-6 (K00225), a potent, ATP-competitive inhibitor. Its function is as follows. Serine/threonine kinase which is involved in the regulation of apoptosis, autophagy, transcription, translation and actin cytoskeleton reorganization. Involved in the regulation of smooth muscle contraction. Regulates both type I (caspase-dependent) apoptotic and type II (caspase-independent) autophagic cell deaths signal, depending on the cellular setting. Involved in regulation of starvation-induced autophagy. Regulates myosin phosphorylation in both smooth muscle and non-muscle cells. In smooth muscle, regulates myosin either directly by phosphorylating MYL12B and MYL9 or through inhibition of smooth muscle myosin phosphatase (SMPP1M) via phosphorylation of PPP1R12A; the inhibition of SMPP1M functions to enhance muscle responsiveness to Ca(2+) and promote a contractile state. Phosphorylates MYL12B in non-muscle cells leading to reorganization of actin cytoskeleton. Isoform 2 can phosphorylate myosin, PPP1R12A and MYL12B. Overexpression leads to condensation of actin stress fibers into thick bundles. Involved in actin filament focal adhesion dynamics. The function in both reorganization of actin cytoskeleton and focal adhesion dissolution is modulated by RhoD. Positively regulates canonical Wnt/beta-catenin signaling through interaction with NLK and TCF7L2. Phosphorylates RPL13A on 'Ser-77' upon interferon-gamma activation which is causing RPL13A release from the ribosome, RPL13A association with the GAIT complex and its subsequent involvement in transcript-selective translation inhibition. Enhances transcription from AR-responsive promoters in a hormone- and kinase-dependent manner. Involved in regulation of cell cycle progression and cell proliferation. May be a tumor suppressor. The chain is Death-associated protein kinase 3 (DAPK3) from Homo sapiens (Human).